A 134-amino-acid chain; its full sequence is 15.4 kDa class V heat shock protein (134 aa).

Positions 19–126 constitute a sHSP domain; sequence SLNNYQENHV…LIDPSDVPES (108 aa).

It belongs to the small heat shock protein (HSP20) family. As to quaternary structure, may form oligomeric structures.

The protein resides in the cytoplasm. In Arabidopsis thaliana (Mouse-ear cress), this protein is 15.4 kDa class V heat shock protein (HSP15.4).